We begin with the raw amino-acid sequence, 485 residues long: Membrane-bound lytic murein transglycosylase F (485 aa).

Residues M1–E29 form the signal peptide. The tract at residues K30–V267 is non-LT domain. The LT domain stretch occupies residues D268 to M485. The active site involves E314. Residues E465–M485 are disordered. Over residues N474–M485 the composition is skewed to basic and acidic residues.

This sequence in the N-terminal section; belongs to the bacterial solute-binding protein 3 family. The protein in the C-terminal section; belongs to the transglycosylase Slt family.

It is found in the cell outer membrane. The catalysed reaction is Exolytic cleavage of the (1-&gt;4)-beta-glycosidic linkage between N-acetylmuramic acid (MurNAc) and N-acetylglucosamine (GlcNAc) residues in peptidoglycan, from either the reducing or the non-reducing ends of the peptidoglycan chains, with concomitant formation of a 1,6-anhydrobond in the MurNAc residue.. Its function is as follows. Murein-degrading enzyme that degrades murein glycan strands and insoluble, high-molecular weight murein sacculi, with the concomitant formation of a 1,6-anhydromuramoyl product. Lytic transglycosylases (LTs) play an integral role in the metabolism of the peptidoglycan (PG) sacculus. Their lytic action creates space within the PG sacculus to allow for its expansion as well as for the insertion of various structures such as secretion systems and flagella. The protein is Membrane-bound lytic murein transglycosylase F of Pseudomonas putida (strain ATCC 700007 / DSM 6899 / JCM 31910 / BCRC 17059 / LMG 24140 / F1).